The chain runs to 257 residues: Ribonuclease HII (257 aa).

Residues 72 to 257 (TYIAGIDEVG…FAPIKDMIKK (186 aa)) form the RNase H type-2 domain. 3 residues coordinate a divalent metal cation: D78, E79, and D170.

The protein belongs to the RNase HII family. The cofactor is Mn(2+). Requires Mg(2+) as cofactor.

Its subcellular location is the cytoplasm. The enzyme catalyses Endonucleolytic cleavage to 5'-phosphomonoester.. Functionally, endonuclease that specifically degrades the RNA of RNA-DNA hybrids. This Bacillus anthracis (strain A0248) protein is Ribonuclease HII.